The following is a 620-amino-acid chain: MNWELYSSPLRVFWRSKVWDEKTSTFTSDENLKIGKMVGKRRRPRPKRSIDLEDSTEQLISGDMVTFPCSVCYRELNKARNFLHKKHHNALSMLGFQWMGGRQPKPKLVSLHRECIISNLLRSSTYNEKVLHNVNYAFEFLWKKQVPSYFKLCDKVGETSTYSPNSNHLMIKGIAICSNNNSAWKAEPNCKFTVVNDFGDKANVCFFGLFDSHYGYAAADLASKEFQVLLLHQLSIQDPSYQMTAEQKQLINSFDTVFREEYRAREEAFSSTYKTFRTSRREYEDTHKAFAKAFWRMDRLLRLGRNETSRVRWSGCSALTCILEGGIKNPHANKDWEKTYQQGSTSLPFQKTPQIISGVLHLANAGNVQAVLCRNGKGFCLTKEHSTRNTKERRRVLYSEAVISSDDPYGLLDGHIKTTRGLGFHGNLRLKKSIIPAPQTISVPIDDLCQFLILATNGLWQVLDKKEVTALVITLFHAYKETHVPRPKSKPWPPIGLLSPPDSNIRVLFQYQPENEDIMSTADGTKGLSDSIYAEAYTHQGTFSPKVTPYDPCSTKENSSLPTIDSKQENEKELCIKNFYKGAAEYIGCELVSAAIEGGSRDSITVMVMFLNGSEYHRLT.

The region spanning 173 to 611 (GIAICSNNNS…DSITVMVMFL (439 aa)) is the PPM-type phosphatase domain.

This sequence belongs to the PP2C family.

This Mus musculus (Mouse) protein is Protein phosphatase 2C-like domain-containing protein 1 (Pp2d1).